Here is a 234-residue protein sequence, read N- to C-terminus: Large ribosomal subunit protein uL1 (234 aa).

Belongs to the universal ribosomal protein uL1 family. In terms of assembly, part of the 50S ribosomal subunit.

Functionally, binds directly to 23S rRNA. The L1 stalk is quite mobile in the ribosome, and is involved in E site tRNA release. Its function is as follows. Protein L1 is also a translational repressor protein, it controls the translation of the L11 operon by binding to its mRNA. This Prochlorococcus marinus (strain MIT 9211) protein is Large ribosomal subunit protein uL1.